We begin with the raw amino-acid sequence, 563 residues long: Alpha-keto-acid decarboxylase (563 aa).

Glu59 serves as a coordination point for thiamine diphosphate. The segment at 347–367 (SSPPVASPPAEPLPPPPPREQ) is disordered. The span at 351–366 (VASPPAEPLPPPPPRE) shows a compositional bias: pro residues. The thiamine pyrophosphate binding stretch occupies residues 394–476 (TSFYGMADHR…VVVNNDGYTV (83 aa)). Mg(2+) is bound by residues Asp444, Asn471, and Gly473.

The protein belongs to the TPP enzyme family. A metal cation is required as a cofactor. The cofactor is thiamine diphosphate.

In terms of biological role, decarboxylates branched-chain and aromatic alpha-keto acids to aldehydes. The protein is Alpha-keto-acid decarboxylase (kdc) of Mycolicibacterium paratuberculosis (strain ATCC BAA-968 / K-10) (Mycobacterium paratuberculosis).